The primary structure comprises 89 residues: Gamma-bungarotoxin (89 aa).

A signal peptide spans 1–21 (MKTLLLTLVVVTIVCLDLGYT). 5 cysteine pairs are disulfide-bonded: Cys-24-Cys-45, Cys-27-Cys-32, Cys-38-Cys-66, Cys-70-Cys-81, and Cys-82-Cys-87. Residues 54-56 (RGD) carry the Cell attachment site motif.

It belongs to the three-finger toxin family. Ancestral subfamily. Orphan group V sub-subfamily. In terms of tissue distribution, expressed by the venom gland.

It localises to the secreted. In terms of biological role, exhibits M2 muscarinic acetylcholine receptor (CHRM2)-blocking activity, but has a weak binding activity toward nicotinic AChR. Moreover, it inhibits collagen-induced platelet aggregation. The sequence is that of Gamma-bungarotoxin from Bungarus multicinctus (Many-banded krait).